Consider the following 246-residue polypeptide: MyoD family inhibitor (246 aa).

2 disordered regions span residues 1–76 (MYQV…LDST) and 91–151 (GNPL…SKST). The segment covering 14–26 (APYGAPSAAPGPA) has biased composition (low complexity). In terms of domain architecture, MDFI spans 99 to 246 (LLPNDSGHPS…MECCGLCFSS (148 aa)).

Belongs to the MDFI family. As to quaternary structure, interacts (via C-terminus) with AXIN1 and LEF1. Interacts with CCNT2. Interacts (via C-terminus) with Piezo channel composed of PIEZO1 or PIEZO2; the interaction prolongs Piezo channel inactivation.

Its subcellular location is the nucleus. It localises to the cytoplasm. Functionally, inhibits the transactivation activity of the Myod family of myogenic factors and represses myogenesis. Acts by associating with Myod family members and retaining them in the cytoplasm by masking their nuclear localization signals. Can also interfere with the DNA-binding activity of Myod family members. Plays an important role in trophoblast and chondrogenic differentiation. Regulates the transcriptional activity of TCF7L1/TCF3 by interacting directly with TCF7L1/TCF3 and preventing it from binding DNA. Binds to the axin complex, resulting in an increase in the level of free beta-catenin. Affects axin regulation of the WNT and JNK signaling pathways. Regulates the activity of mechanosensitive Piezo channel. The polypeptide is MyoD family inhibitor (MDFI) (Homo sapiens (Human)).